A 472-amino-acid chain; its full sequence is WAS protein family homolog DDB_G0292878 (472 aa).

Positions 279 to 472 are disordered; it reads LPTYDNSNSG…ESDTDSSEWE (194 aa). A compositionally biased stretch (polar residues) spans 282–299; it reads YDNSNSGSAPVNQSSGGD. A compositionally biased stretch (low complexity) spans 300–314; sequence NNVNNNNNNNNSNNS. The segment covering 320 to 356 has biased composition (pro residues); it reads PPQPTNAPPPPPPPPQSANAPPPPPPPPVSAPPPFNP. The segment covering 363–373 has biased composition (acidic residues); sequence NDDDDDDDDDN. The span at 374-383 shows a compositional bias: gly residues; that stretch reads GGGGGPGGAI. The region spanning 382–401 is the WH2 domain; the sequence is AIGDLLADIRRGHKNRLKKA. Residues 457-472 show a composition bias toward acidic residues; the sequence is TDDQDGESDTDSSEWE.

It belongs to the WASH1 family.

In terms of biological role, acts as a nucleation-promoting factor by activating the Arp2/3 complex to induce actin polymerization. This chain is WAS protein family homolog DDB_G0292878, found in Dictyostelium discoideum (Social amoeba).